We begin with the raw amino-acid sequence, 86 residues long: Weak neurotoxin 6 (86 aa).

Positions 1-21 (MKTLLLTLVVVTIVCLDLGYT) are cleaved as a signal peptide. Disulfide bonds link cysteine 24–cysteine 45, cysteine 27–cysteine 32, cysteine 38–cysteine 63, cysteine 67–cysteine 78, and cysteine 79–cysteine 84.

The protein belongs to the three-finger toxin family. Ancestral subfamily. Orphan group II sub-subfamily. Expressed by the venom gland.

The protein localises to the secreted. Its function is as follows. Binds with low affinity to muscular (alpha-1-beta-1-delta-epsilon/CHRNA1-CHRNB1-CHRND-CHRNE) and very low affinity to neuronal (alpha-7/CHRNA7) nicotinic acetylcholine receptor (nAChR). This Naja sputatrix (Malayan spitting cobra) protein is Weak neurotoxin 6.